The primary structure comprises 259 residues: Imidazole glycerol phosphate synthase subunit HisF (259 aa).

Catalysis depends on residues D11 and D130.

The protein belongs to the HisA/HisF family. As to quaternary structure, heterodimer of HisH and HisF.

It localises to the cytoplasm. It catalyses the reaction 5-[(5-phospho-1-deoxy-D-ribulos-1-ylimino)methylamino]-1-(5-phospho-beta-D-ribosyl)imidazole-4-carboxamide + L-glutamine = D-erythro-1-(imidazol-4-yl)glycerol 3-phosphate + 5-amino-1-(5-phospho-beta-D-ribosyl)imidazole-4-carboxamide + L-glutamate + H(+). It functions in the pathway amino-acid biosynthesis; L-histidine biosynthesis; L-histidine from 5-phospho-alpha-D-ribose 1-diphosphate: step 5/9. In terms of biological role, IGPS catalyzes the conversion of PRFAR and glutamine to IGP, AICAR and glutamate. The HisF subunit catalyzes the cyclization activity that produces IGP and AICAR from PRFAR using the ammonia provided by the HisH subunit. In Solidesulfovibrio magneticus (strain ATCC 700980 / DSM 13731 / RS-1) (Desulfovibrio magneticus), this protein is Imidazole glycerol phosphate synthase subunit HisF.